Consider the following 320-residue polypeptide: Phospho-N-acetylmuramoyl-pentapeptide-transferase (320 aa).

Transmembrane regions (helical) follow at residues 7 to 27, 50 to 70, 77 to 97, 113 to 133, 148 to 168, 173 to 193, 198 to 216, 221 to 241, 247 to 267, and 297 to 317; these read ILAI…VIPF, GTPT…SLIF, IGAP…DDFI, LVLQ…HLGS, WAYV…VNLT, GLAS…SIFS, MAIF…LRYN, VVFM…AIAV, VLVL…MLQV, and VVVV…AMIQ.

This sequence belongs to the glycosyltransferase 4 family. MraY subfamily. The cofactor is Mg(2+).

The protein localises to the cell membrane. The enzyme catalyses UDP-N-acetyl-alpha-D-muramoyl-L-alanyl-gamma-D-glutamyl-meso-2,6-diaminopimeloyl-D-alanyl-D-alanine + di-trans,octa-cis-undecaprenyl phosphate = di-trans,octa-cis-undecaprenyl diphospho-N-acetyl-alpha-D-muramoyl-L-alanyl-D-glutamyl-meso-2,6-diaminopimeloyl-D-alanyl-D-alanine + UMP. Its pathway is cell wall biogenesis; peptidoglycan biosynthesis. Catalyzes the initial step of the lipid cycle reactions in the biosynthesis of the cell wall peptidoglycan: transfers peptidoglycan precursor phospho-MurNAc-pentapeptide from UDP-MurNAc-pentapeptide onto the lipid carrier undecaprenyl phosphate, yielding undecaprenyl-pyrophosphoryl-MurNAc-pentapeptide, known as lipid I. This chain is Phospho-N-acetylmuramoyl-pentapeptide-transferase, found in Caldicellulosiruptor bescii (strain ATCC BAA-1888 / DSM 6725 / KCTC 15123 / Z-1320) (Anaerocellum thermophilum).